A 191-amino-acid chain; its full sequence is Thioredoxin F-type, chloroplastic (191 aa).

The 123-residue stretch at 68–190 (KASLETAVGA…LVAAIEAARS (123 aa)) folds into the Thioredoxin domain. Residues Cys115 and Cys118 each act as nucleophile in the active site. An intrachain disulfide couples Cys115 to Cys118.

The protein belongs to the thioredoxin family. Plant F-type subfamily. In terms of assembly, forms a complex with heterodimeric ferredoxin-thioredoxin reductase (FTR) and ferredoxin.

The protein localises to the plastid. The protein resides in the chloroplast. Its function is as follows. Participates in various redox reactions through the reversible oxidation of the active center dithiol to a disulfide. The F form is known to activate a number of enzymes of the photosynthetic carbon cycle. This is Thioredoxin F-type, chloroplastic from Mesembryanthemum crystallinum (Common ice plant).